We begin with the raw amino-acid sequence, 396 residues long: Ribosomal RNA large subunit methyltransferase I (396 aa).

In terms of domain architecture, PUA spans 2–81 (SVRLVLAKGR…ESIDIAFFTR (80 aa)).

This sequence belongs to the methyltransferase superfamily. RlmI family.

It is found in the cytoplasm. The enzyme catalyses cytidine(1962) in 23S rRNA + S-adenosyl-L-methionine = 5-methylcytidine(1962) in 23S rRNA + S-adenosyl-L-homocysteine + H(+). Its function is as follows. Specifically methylates the cytosine at position 1962 (m5C1962) of 23S rRNA. This chain is Ribosomal RNA large subunit methyltransferase I, found in Escherichia coli (strain UTI89 / UPEC).